The primary structure comprises 222 residues: Glutathione S-transferase A1 (222 aa).

Residue M1 is modified to N-acetylmethionine. A2 carries the post-translational modification N-acetylalanine; in Glutathione S-transferase A1, N-terminally processed. Residues 3-83 (EKPKLHYFNA…YIASKYNLYG (81 aa)) enclose the GST N-terminal domain. At K4 the chain carries N6-succinyllysine. Glutathione-binding positions include Y9, R45, 54–55 (QV), and 67–68 (QT). A GST C-terminal domain is found at 85 to 207 (DIKERALIDM…LQPGSPRKPP (123 aa)).

The protein belongs to the GST superfamily. Alpha family. In terms of assembly, homodimer or heterodimer of GSTA1 and GSTA2. As to expression, liver.

The protein localises to the cytoplasm. It carries out the reaction RX + glutathione = an S-substituted glutathione + a halide anion + H(+). The catalysed reaction is prostaglandin A2 + glutathione = prostaglandin A2-S-(R)-glutathione. The enzyme catalyses prostaglandin J2 + glutathione = prostaglandin J2-S-(R)-glutathione. It catalyses the reaction (13S)-hydroperoxy-(9Z,11E)-octadecadienoate + 2 glutathione = (13S)-hydroxy-(9Z,11E)-octadecadienoate + glutathione disulfide + H2O. It carries out the reaction androst-5-ene-3,17-dione = androst-4-ene-3,17-dione. The isomerase activity is inhibited by S-methylglutathione (GSMe). In terms of biological role, glutathione S-transferase that catalyzes the nucleophilic attack of the sulfur atom of glutathione on the electrophilic groups of a wide range of exogenous and endogenous compounds. Involved in the formation of glutathione conjugates of both prostaglandin A2 (PGA2) and prostaglandin J2 (PGJ2). It also catalyzes the isomerization of D5-androstene-3,17-dione (AD) into D4-androstene-3,17-dione and may therefore play an important role in hormone biosynthesis. Through its glutathione-dependent peroxidase activity toward the fatty acid hydroperoxide (13S)-hydroperoxy-(9Z,11E)-octadecadienoate/13-HPODE it is also involved in the metabolism of oxidized linoleic acid. This chain is Glutathione S-transferase A1 (GSTA1), found in Homo sapiens (Human).